The primary structure comprises 249 residues: Caffeoyl-CoA O-methyltransferase 1 (249 aa).

Substrate is bound at residue Lys23. S-adenosyl-L-methionine is bound by residues Thr65, Glu87, 89 to 90, Ser95, Asp113, and Ala142; that span reads GV. Asp165 is a binding site for substrate. An a divalent metal cation-binding site is contributed by Asp165. An S-adenosyl-L-methionine-binding site is contributed by Asp167. Residues Asp191 and Asn192 each coordinate a divalent metal cation. Residue Asn196 participates in substrate binding.

This sequence belongs to the class I-like SAM-binding methyltransferase superfamily. Cation-dependent O-methyltransferase family. CCoAMT subfamily. It depends on a divalent metal cation as a cofactor. As to expression, mostly expressed in petal limbs and tubes, and, at low levels, in flower buds, stamens, pistils, stems, roots and leaves.

It localises to the cytoplasm. It is found in the cytosol. It carries out the reaction (E)-caffeoyl-CoA + S-adenosyl-L-methionine = (E)-feruloyl-CoA + S-adenosyl-L-homocysteine + H(+). The catalysed reaction is (E)-5-hydroxyferuloyl-CoA + S-adenosyl-L-methionine = (E)-sinapoyl-CoA + S-adenosyl-L-homocysteine + H(+). It participates in aromatic compound metabolism; phenylpropanoid biosynthesis. Involved in the production of floral volatile phenylpropanoids in flowers of fragrant cultivars (e.g. cv. Mitchell and cv. V26) from cinnamic acid, a common precursor with the anthocyanin biosynthesis pathway involved in flower pigmentation. Methylates caffeoyl-CoA to feruloyl-CoA, also able to methylate 5-hydroxyferuloyl-CoA. The protein is Caffeoyl-CoA O-methyltransferase 1 of Petunia hybrida (Petunia).